The chain runs to 890 residues: ATP-dependent DNA helicase DDX11 (890 aa).

The Helicase ATP-binding domain occupies lysine 4–leucine 424. Serine 39–serine 46 lines the ATP pocket. The span at leucine 71–asparagine 85 shows a compositional bias: basic and acidic residues. 2 disordered regions span residues leucine 71–tryptophan 95 and glutamate 176–aspartate 199. 4 residues coordinate [4Fe-4S] cluster: cysteine 246, cysteine 264, cysteine 294, and cysteine 329. The DEAH box motif lies at aspartate 372–histidine 375.

This sequence belongs to the DEAD box helicase family. DEAH subfamily. DDX11/CHL1 sub-subfamily. It depends on [4Fe-4S] cluster as a cofactor.

The protein localises to the nucleus. It is found in the nucleolus. It localises to the cytoplasm. Its subcellular location is the cytoskeleton. The protein resides in the spindle pole. The protein localises to the midbody. It is found in the microtubule organizing center. It localises to the centrosome. It catalyses the reaction Couples ATP hydrolysis with the unwinding of duplex DNA at the replication fork by translocating in the 5'-3' direction. This creates two antiparallel DNA single strands (ssDNA). The leading ssDNA polymer is the template for DNA polymerase III holoenzyme which synthesizes a continuous strand.. The enzyme catalyses ATP + H2O = ADP + phosphate + H(+). DNA-dependent ATPase and ATP-dependent DNA helicase that participates in various functions in genomic stability, including DNA replication, DNA repair and heterochromatin organization as well as in ribosomal RNA synthesis. Plays a role in DNA double-strand break (DSB) repair at the DNA replication fork during DNA replication recovery from DNA damage. Plays a role in the regulation of sister chromatid cohesion and mitotic chromosome segregation. Stimulates 5'-single-stranded DNA flap endonuclease activity of FEN1 in an ATP- and helicase-independent manner. Also plays a role in heterochromatin organization. Involved in rRNA transcription activation through binding to active hypomethylated rDNA gene loci by recruiting UBTF and the RNA polymerase Pol I transcriptional machinery. Plays a role in embryonic development. Associates with chromatin at DNA replication fork regions. Binds to single- and double-stranded DNAs. This Danio rerio (Zebrafish) protein is ATP-dependent DNA helicase DDX11.